A 70-amino-acid chain; its full sequence is uncharacterized protein (70 aa).

Residues 14–34 (CLVVWFACVYSLLILVVLLLI) traverse the membrane as a helical segment.

Its subcellular location is the virion membrane. This is an uncharacterized protein from Homo sapiens (Human).